The sequence spans 448 residues: Elongation factor 1-alpha (448 aa).

The tr-type G domain maps to 5-230 (KIHISIVVIG…DQINEPKRPS (226 aa)). Residues 14–21 (GHVDSGKS) are G1. 14–21 (GHVDSGKS) provides a ligand contact to GTP. Lys55 is modified (N6,N6-dimethyllysine). The tract at residues 70–74 (GITID) is G2. Residue Lys79 is modified to N6,N6,N6-trimethyllysine. Residues 91 to 94 (DAPG) are G3. Residues 91 to 95 (DAPGH) and 153 to 156 (NKMD) contribute to the GTP site. Positions 153 to 156 (NKMD) are G4. Lys187 is subject to N6,N6,N6-trimethyllysine. Positions 194–196 (SGF) are G5. Lys261 is subject to N6-methyllysine. Glu289 bears the 5-glutamyl glycerylphosphorylethanolamine mark. Lys306 is subject to N6,N6,N6-trimethyllysine. Glu362 bears the 5-glutamyl glycerylphosphorylethanolamine mark. The residue at position 396 (Lys396) is an N6,N6,N6-trimethyllysine.

The protein belongs to the TRAFAC class translation factor GTPase superfamily. Classic translation factor GTPase family. EF-Tu/EF-1A subfamily.

Its subcellular location is the cytoplasm. Its function is as follows. This protein promotes the GTP-dependent binding of aminoacyl-tRNA to the A-site of ribosomes during protein biosynthesis. The polypeptide is Elongation factor 1-alpha (Solanum lycopersicum (Tomato)).